The sequence spans 737 residues: Zinc finger protein 280C (737 aa).

Glycyl lysine isopeptide (Lys-Gly) (interchain with G-Cter in SUMO2) cross-links involve residues Lys-5, Lys-10, Lys-14, Lys-33, and Lys-55. Residues 57–66 are compositionally biased toward polar residues; it reads AISNILNRGH. Residues 57 to 137 are disordered; sequence AISNILNRGH…DFTKNSQVGS (81 aa). A Glycyl lysine isopeptide (Lys-Gly) (interchain with G-Cter in SUMO2) cross-link involves residue Lys-75. At Ser-80 the chain carries Phosphoserine. Over residues 112 to 123 the composition is skewed to polar residues; it reads SKSSQSSVTVEN. Residues Lys-113, Lys-126, Lys-167, Lys-174, Lys-180, and Lys-187 each participate in a glycyl lysine isopeptide (Lys-Gly) (interchain with G-Cter in SUMO2) cross-link. Positions 176–185 are enriched in polar residues; it reads PSTSKVNSVT. The tract at residues 176–223 is disordered; sequence PSTSKVNSVTPKKPKTSEDVPQINPSTSLPLIGSPPVTSSQVMLSKGT. Positions 211–223 are enriched in polar residues; it reads PVTSSQVMLSKGT. Thr-223 carries the post-translational modification Phosphothreonine. Ser-227 bears the Phosphoserine mark. Lys-273 participates in a covalent cross-link: Glycyl lysine isopeptide (Lys-Gly) (interchain with G-Cter in SUMO2). 5 consecutive C2H2-type zinc fingers follow at residues 316–338, 353–376, 383–406, 413–436, and 470–492; these read FKCFSCSKVLKNNIRFMNHMKHH, TTCQHCYRQYPTPFQLQCHIESTH, TICKICELSFETEHILLQHMKDTH, YVCQVCQFRSSTFSDVEAHFRAAH, and HRCPKCRLQFLTSKEKAEHKAQH. A Glycyl lysine isopeptide (Lys-Gly) (interchain with G-Cter in SUMO2) cross-link involves residue Lys-522. The span at 535–579 shows a compositional bias: polar residues; the sequence is SFLQVTPPTSQNTTARNPRKSNASRSKTSKLHATTSTASKVNTSK. Positions 535 to 602 are disordered; it reads SFLQVTPPTS…YKQKRQRNRK (68 aa). Residue Thr-540 is modified to Phosphothreonine. Residues Lys-564 and Lys-574 each participate in a glycyl lysine isopeptide (Lys-Gly) (interchain with G-Cter in SUMO2) cross-link. Residues 580-602 show a composition bias toward basic residues; sequence PRGRIAKSKAKPSYKQKRQRNRK.

It localises to the nucleus. May function as a transcription factor. The polypeptide is Zinc finger protein 280C (ZNF280C) (Homo sapiens (Human)).